Consider the following 140-residue polypeptide: Transmembrane protein 107 (140 aa).

2 helical membrane passes run 7 to 27 (LVPS…TLFW) and 53 to 73 (LVAA…GFLS). The N-linked (GlcNAc...) asparagine glycan is linked to Asn-79. 2 helical membrane-spanning segments follow: residues 83-103 (SLLS…FVFE) and 113-133 (IFTF…IAVF).

As to quaternary structure, part of the tectonic-like complex (also named B9 complex). Interacts with TMEM237, TMEM231, MKS1 and TMEM216.

Its subcellular location is the membrane. The protein localises to the cell projection. The protein resides in the cilium. Functionally, plays a role in cilia formation and embryonic patterning. Requires for normal Sonic hedgehog (Shh) signaling in the neural tube and acts in combination with GLI2 and GLI3 to pattern ventral and intermediate neuronal cell types. During ciliogenesis regulates the ciliary transition zone localization of some MKS complex proteins. This chain is Transmembrane protein 107, found in Mus musculus (Mouse).